Reading from the N-terminus, the 212-residue chain is ATP-dependent dethiobiotin synthetase BioD (212 aa).

12–17 (DCGKTF) is a binding site for ATP. Threonine 16 lines the Mg(2+) pocket. Lysine 33 is an active-site residue. Substrate is bound at residue serine 37. Residues aspartate 50, 110–113 (EGAG), and 170–171 (NC) contribute to the ATP site. Residues aspartate 50 and glutamate 110 each coordinate Mg(2+).

Belongs to the dethiobiotin synthetase family. Homodimer. It depends on Mg(2+) as a cofactor.

The protein localises to the cytoplasm. It carries out the reaction (7R,8S)-7,8-diammoniononanoate + CO2 + ATP = (4R,5S)-dethiobiotin + ADP + phosphate + 3 H(+). It participates in cofactor biosynthesis; biotin biosynthesis; biotin from 7,8-diaminononanoate: step 1/2. In terms of biological role, catalyzes a mechanistically unusual reaction, the ATP-dependent insertion of CO2 between the N7 and N8 nitrogen atoms of 7,8-diaminopelargonic acid (DAPA, also called 7,8-diammoniononanoate) to form a ureido ring. The polypeptide is ATP-dependent dethiobiotin synthetase BioD (Legionella pneumophila (strain Lens)).